The sequence spans 427 residues: Glutamate-1-semialdehyde 2,1-aminomutase (427 aa).

Lys268 carries the N6-(pyridoxal phosphate)lysine modification.

The protein belongs to the class-III pyridoxal-phosphate-dependent aminotransferase family. HemL subfamily. It depends on pyridoxal 5'-phosphate as a cofactor.

The protein resides in the cytoplasm. The enzyme catalyses (S)-4-amino-5-oxopentanoate = 5-aminolevulinate. Its pathway is porphyrin-containing compound metabolism; protoporphyrin-IX biosynthesis; 5-aminolevulinate from L-glutamyl-tRNA(Glu): step 2/2. This is Glutamate-1-semialdehyde 2,1-aminomutase from Methanococcus maripaludis (strain C7 / ATCC BAA-1331).